The following is a 501-amino-acid chain: Glycosyltransferase family 92 protein F13G3.3 (501 aa).

Residues 10-30 (LSVVLLFSFLFFVTAVLLQFI) form a helical membrane-spanning segment. One can recognise a GT92 domain in the interval 151-439 (KPVVMCISPL…ISDCYKQSYY (289 aa)).

It belongs to the glycosyltransferase 92 family.

Its subcellular location is the membrane. The protein is Glycosyltransferase family 92 protein F13G3.3 of Caenorhabditis elegans.